Reading from the N-terminus, the 191-residue chain is Large ribosomal subunit protein bL9 (191 aa).

A disordered region spans residues 151–191 (AERQAKGESLTSADAIYGVDEDALKPEDFFNPEAEIESEEE).

Belongs to the bacterial ribosomal protein bL9 family.

Binds to the 23S rRNA. The sequence is that of Large ribosomal subunit protein bL9 from Sinorhizobium medicae (strain WSM419) (Ensifer medicae).